The following is a 47-amino-acid chain: uncharacterized protein (47 aa).

Positions 24 to 47 (FGPNPIEPPTDIAPDPDSTKTWLI) are disordered.

This is an uncharacterized protein from Mycobacterium tuberculosis (strain ATCC 25618 / H37Rv).